The primary structure comprises 78 residues: Acyl carrier protein (78 aa).

Residues 2-77 (DNIVERVKKI…QAVDYILAGK (76 aa)) form the Carrier domain. An O-(pantetheine 4'-phosphoryl)serine modification is found at Ser37.

Belongs to the acyl carrier protein (ACP) family. 4'-phosphopantetheine is transferred from CoA to a specific serine of apo-ACP by AcpS. This modification is essential for activity because fatty acids are bound in thioester linkage to the sulfhydryl of the prosthetic group.

The protein resides in the cytoplasm. Its pathway is lipid metabolism; fatty acid biosynthesis. Its function is as follows. Carrier of the growing fatty acid chain in fatty acid biosynthesis. This is Acyl carrier protein from Dechloromonas aromatica (strain RCB).